Here is a 230-residue protein sequence, read N- to C-terminus: Ribosome biogenesis protein SLX9 homolog (230 aa).

A compositionally biased stretch (basic residues) spans 1-11 (MGKVRGLRARV). Disordered stretches follow at residues 1–42 (MGKV…SAAG) and 155–187 (LGLE…AQRQ). A compositionally biased stretch (pro residues) spans 25–38 (GPAPPAPEATPPPA). At T34 the chain carries Phosphothreonine. Positions 166 to 177 (RSRESNKPRPSE) are enriched in basic and acidic residues. A Phosphoserine modification is found at S203.

It belongs to the SLX9 family. In terms of tissue distribution, not detected in any tested tissue.

The protein localises to the nucleus. Its subcellular location is the nucleolus. Functionally, may be involved in ribosome biogenesis. The protein is Ribosome biogenesis protein SLX9 homolog of Homo sapiens (Human).